Here is a 315-residue protein sequence, read N- to C-terminus: 4-hydroxy-3-methylbut-2-enyl diphosphate reductase (315 aa).

Cys12 is a [4Fe-4S] cluster binding site. (2E)-4-hydroxy-3-methylbut-2-enyl diphosphate contacts are provided by His43 and His81. Dimethylallyl diphosphate contacts are provided by His43 and His81. Isopentenyl diphosphate is bound by residues His43 and His81. Cys103 contributes to the [4Fe-4S] cluster binding site. His131 is a binding site for (2E)-4-hydroxy-3-methylbut-2-enyl diphosphate. His131 lines the dimethylallyl diphosphate pocket. His131 contributes to the isopentenyl diphosphate binding site. Glu133 acts as the Proton donor in catalysis. Thr170 provides a ligand contact to (2E)-4-hydroxy-3-methylbut-2-enyl diphosphate. [4Fe-4S] cluster is bound at residue Cys198. (2E)-4-hydroxy-3-methylbut-2-enyl diphosphate is bound by residues Ser226, Asn228, and Ser271. Residues Ser226, Asn228, and Ser271 each contribute to the dimethylallyl diphosphate site. Isopentenyl diphosphate-binding residues include Ser226, Asn228, and Ser271.

This sequence belongs to the IspH family. The cofactor is [4Fe-4S] cluster.

The catalysed reaction is isopentenyl diphosphate + 2 oxidized [2Fe-2S]-[ferredoxin] + H2O = (2E)-4-hydroxy-3-methylbut-2-enyl diphosphate + 2 reduced [2Fe-2S]-[ferredoxin] + 2 H(+). It carries out the reaction dimethylallyl diphosphate + 2 oxidized [2Fe-2S]-[ferredoxin] + H2O = (2E)-4-hydroxy-3-methylbut-2-enyl diphosphate + 2 reduced [2Fe-2S]-[ferredoxin] + 2 H(+). It functions in the pathway isoprenoid biosynthesis; dimethylallyl diphosphate biosynthesis; dimethylallyl diphosphate from (2E)-4-hydroxy-3-methylbutenyl diphosphate: step 1/1. Its pathway is isoprenoid biosynthesis; isopentenyl diphosphate biosynthesis via DXP pathway; isopentenyl diphosphate from 1-deoxy-D-xylulose 5-phosphate: step 6/6. Its function is as follows. Catalyzes the conversion of 1-hydroxy-2-methyl-2-(E)-butenyl 4-diphosphate (HMBPP) into a mixture of isopentenyl diphosphate (IPP) and dimethylallyl diphosphate (DMAPP). Acts in the terminal step of the DOXP/MEP pathway for isoprenoid precursor biosynthesis. The protein is 4-hydroxy-3-methylbut-2-enyl diphosphate reductase of Geobacillus sp. (strain WCH70).